Here is a 309-residue protein sequence, read N- to C-terminus: Pantothenate synthetase (309 aa).

Threonine 2 carries the post-translational modification N-acetylthreonine. 40-47 (MGALHEGH) serves as a coordination point for ATP. Catalysis depends on histidine 47, which acts as the Proton donor. Position 72 (glutamine 72) interacts with (R)-pantoate. Residue glutamine 72 coordinates beta-alanine. Mg(2+)-binding residues include aspartate 88, aspartate 89, and glutamine 92. Residue 158–161 (GEKD) participates in ATP binding. Glutamine 164 is a (R)-pantoate binding site. Residues valine 187 and 195 to 198 (MSSR) contribute to the ATP site.

Belongs to the pantothenate synthetase family.

It localises to the cytoplasm. It carries out the reaction (R)-pantoate + beta-alanine + ATP = (R)-pantothenate + AMP + diphosphate + H(+). It participates in cofactor biosynthesis; (R)-pantothenate biosynthesis; (R)-pantothenate from (R)-pantoate and beta-alanine: step 1/1. Its activity is regulated as follows. Pantothenate exhibits uncompetitive inhibition toward both D-pantoate and ATP, and non-competitive inhibition toward beta-alanine. AMPCPP exhibits competitive inhibition toward ATP, uncompetitive inhibition toward beta-alanine, and non-competitive inhibition toward D-pantoate. The enzyme is most active in the presence of magnesium or manganese. Other divalent cations (cobalt, nickel, zinc) are less effective. In terms of biological role, catalyzes the condensation of pantoate with beta-alanine in an ATP-dependent reaction via a pantoyl-adenylate intermediate. The protein is Pantothenate synthetase (panC) of Mycobacterium tuberculosis (strain ATCC 25618 / H37Rv).